The sequence spans 342 residues: MGDREECLSTPQPPMSVVKSIELVLPEDRIYLAGSSIKGQVILTLNSTLVDPIVKVELVGRGYVEWSEEAGASCDYSRNVICNNKADYVHKTKTFPVEDNWLSAGSHTFDFHFNLPPRLPSTFTSKFGHVFYFVQASCMGREHILAKKRMYLLVQGTSTFHKETPFQNPLFVEAEEKVSYNCCRQGTVCLQIQMERNTFTPGEKVVFTTEINNQTSKCIKTVVFALYAHIQYEGFTPSAERRSRLDSSELLRQEANTPVTRFNTTKVVSTFNLPLLLSVSSSTQDGEIMHTRYELVTTVHLPWSLTSLKAKVPIIITSASVDSAICQLSEDGVLPVNPDHQN.

It belongs to the arrestin family. In terms of tissue distribution, testis-enriched.

It is found in the membrane. Plays an essential role in spermatogenesis. May be involved in the anchoring of the sperm head to the tail during spermatogenesis by affecting SEC22A-mediated SUN5 and NDC1 transport and localization. This chain is Arrestin domain-containing protein 5 (ARRDC5), found in Homo sapiens (Human).